Here is a 532-residue protein sequence, read N- to C-terminus: UDP-N-acetylmuramyl-tripeptide synthetase (532 aa).

S34 is a binding site for UDP-N-acetyl-alpha-D-muramoyl-L-alanyl-D-glutamate. 127-133 (GTEGKSS) contributes to the ATP binding site. UDP-N-acetyl-alpha-D-muramoyl-L-alanyl-D-glutamate contacts are provided by residues 171 to 172 (TT), S198, and R208. The residue at position 240 (K240) is an N6-carboxylysine.

The protein belongs to the MurCDEF family. MurE subfamily. Carboxylation is probably crucial for Mg(2+) binding and, consequently, for the gamma-phosphate positioning of ATP.

The protein localises to the cytoplasm. Its pathway is cell wall biogenesis; peptidoglycan biosynthesis. Its function is as follows. Catalyzes the addition of an amino acid to the nucleotide precursor UDP-N-acetylmuramoyl-L-alanyl-D-glutamate (UMAG) in the biosynthesis of bacterial cell-wall peptidoglycan. The chain is UDP-N-acetylmuramyl-tripeptide synthetase from Treponema denticola (strain ATCC 35405 / DSM 14222 / CIP 103919 / JCM 8153 / KCTC 15104).